We begin with the raw amino-acid sequence, 277 residues long: Glutamate racemase (277 aa).

Substrate is bound by residues 16–17 (DS) and 48–49 (YG). C79 (proton donor/acceptor) is an active-site residue. 80–81 (NT) is a binding site for substrate. C191 acts as the Proton donor/acceptor in catalysis. 192–193 (TH) provides a ligand contact to substrate.

It belongs to the aspartate/glutamate racemases family.

It carries out the reaction L-glutamate = D-glutamate. It functions in the pathway cell wall biogenesis; peptidoglycan biosynthesis. Its function is as follows. Provides the (R)-glutamate required for cell wall biosynthesis. The sequence is that of Glutamate racemase from Symbiobacterium thermophilum (strain DSM 24528 / JCM 14929 / IAM 14863 / T).